A 239-amino-acid polypeptide reads, in one-letter code: MTKTPTLSQADRLTLEAAIGHAFVEKERLDWALTHASARTHKAGNYERLEFLGDRVLGLCIAELLFRTFGTATEGELSVRLNQLVSAETCAAVADEMQLHLFIRTGADVKKLTGKRMLNVRADVVESLIAALYLDGGLEVARKFILRYWEGRAVRPDGARRDAKTELQEWAHAKFGVTPVYRVDDRSGPDHDPRFTVTVEVAGAAPETGIERSKRAAEQVAATRILEREGIWQPQSAQK.

An RNase III domain is found at 12 to 137; sequence RLTLEAAIGH…LIAALYLDGG (126 aa). Residue E50 participates in Mg(2+) binding. D54 is a catalytic residue. The Mg(2+) site is built by D123 and E126. E126 is a catalytic residue. Residues 162-231 enclose the DRBM domain; it reads DAKTELQEWA…ATRILEREGI (70 aa).

Belongs to the ribonuclease III family. Homodimer. Requires Mg(2+) as cofactor.

It localises to the cytoplasm. The catalysed reaction is Endonucleolytic cleavage to 5'-phosphomonoester.. In terms of biological role, digests double-stranded RNA. Involved in the processing of primary rRNA transcript to yield the immediate precursors to the large and small rRNAs (23S and 16S). Processes some mRNAs, and tRNAs when they are encoded in the rRNA operon. Processes pre-crRNA and tracrRNA of type II CRISPR loci if present in the organism. This chain is Ribonuclease 3, found in Rhizobium rhizogenes (strain K84 / ATCC BAA-868) (Agrobacterium radiobacter).